We begin with the raw amino-acid sequence, 308 residues long: tRNA dimethylallyltransferase 1 (308 aa).

Position 9 to 16 (9 to 16) interacts with ATP; sequence GPTGVGKT. 11 to 16 provides a ligand contact to substrate; that stretch reads TGVGKT. Residues 34–37 are interaction with substrate tRNA; it reads DSRQ.

Belongs to the IPP transferase family. In terms of assembly, monomer. It depends on Mg(2+) as a cofactor.

The enzyme catalyses adenosine(37) in tRNA + dimethylallyl diphosphate = N(6)-dimethylallyladenosine(37) in tRNA + diphosphate. Its function is as follows. Catalyzes the transfer of a dimethylallyl group onto the adenine at position 37 in tRNAs that read codons beginning with uridine, leading to the formation of N6-(dimethylallyl)adenosine (i(6)A). In Bacteroides thetaiotaomicron (strain ATCC 29148 / DSM 2079 / JCM 5827 / CCUG 10774 / NCTC 10582 / VPI-5482 / E50), this protein is tRNA dimethylallyltransferase 1.